Consider the following 483-residue polypeptide: Xylulose kinase (483 aa).

79 to 80 (MH) provides a ligand contact to substrate.

Belongs to the FGGY kinase family.

It carries out the reaction D-xylulose + ATP = D-xylulose 5-phosphate + ADP + H(+). In terms of biological role, catalyzes the phosphorylation of D-xylulose to D-xylulose 5-phosphate. This is Xylulose kinase from Staphylococcus xylosus.